The sequence spans 872 residues: MSDSQDQDRKAPLKLTQPGKLELKKTVETGQVRQSFSHGRSKVVTVEVRKKRTFTSAGGAMHEIKDGVHSVAEADLAAAVAKVEAASRAASAHDLTTGEKAARAKALQDALRHEEEVRARAEEEAIRHAAEEEAARAAEEEAARLAEEEAARRAAEPQSEPEAAAPAAEPVAPTAPVAAAPAPAPATPVAPAQPKPVAAAAPAGDATAVPRARTEEEEEEEERAKKRAAAHKPAPVKRTEPRRRTGKLTITDALTDDDRSERGRSLAAVKRARERERLKHMQKGSEKVIREVIVPESITVQELANRMAVRGADVIKCLMRLGVMATINQNIDADTAELVVTEFGHNMKRVSEADVLVGLEGEADTDEVLFTRPPVVTVMGHVDHGKTSLLDALRATDVVSGEAGGITQHIGAYQVTMSSGDKITFIDTPGHEAFTAMRARGAKVTDIVVLVVAADDGIMPQTVEAIRHAKAAGVPIIVAINKIDKPGATPEKVRQELLQHELVTEELGGDVLAIEVSAKKRLNLEKLEEAILLQAEILDLKANPTRAAQGVVVEAKMEKGRGSVATVLVQKGTLKVGEVFVAGAEWGRVRALVDDHGNSIKEAGPSTPVEVLGLQGTPAAGDDFVTVEDEARAREIAGYRSRMDREAKAKLAQRGTLEQMFSAIKSGEAQELPVVIKGDVQGSIEAISSTLEKMGNENVKVRILHAAVGAINESDITLAKASNGLLIGFNVRANPQARDMARRDGVDIRYYSIIYDVTDDLKKMLSGMLAPELREKFLGYASIREVFNITKVGKVAGCMITEGTVKRGAKVRLLRDNVVIHTGDLGQLKRFKDDVKDVREGYECGMSFTNYEDIRVGDVIECFEIEEIAVTL.

A compositionally biased stretch (basic and acidic residues) spans 130-155 (AEEEAARAAEEEAARLAEEEAARRAA). The tract at residues 130-282 (AEEEAARAAE…RERERLKHMQ (153 aa)) is disordered. Over residues 156 to 181 (EPQSEPEAAAPAAEPVAPTAPVAAAP) the composition is skewed to low complexity. Residues 182-194 (APAPATPVAPAQP) are compositionally biased toward pro residues. A compositionally biased stretch (low complexity) spans 195–211 (KPVAAAAPAGDATAVPR). A compositionally biased stretch (basic and acidic residues) spans 271–282 (RARERERLKHMQ). Residues 371 to 539 (TRPPVVTVMG…AILLQAEILD (169 aa)) form the tr-type G domain. Positions 380–387 (GHVDHGKT) are G1. A GTP-binding site is contributed by 380 to 387 (GHVDHGKT). The G2 stretch occupies residues 405–409 (GITQH). The interval 427–430 (DTPG) is G3. GTP is bound by residues 427-431 (DTPGH) and 481-484 (NKID). Positions 481–484 (NKID) are G4. Residues 517–519 (SAK) are G5.

The protein belongs to the TRAFAC class translation factor GTPase superfamily. Classic translation factor GTPase family. IF-2 subfamily.

The protein resides in the cytoplasm. Its function is as follows. One of the essential components for the initiation of protein synthesis. Protects formylmethionyl-tRNA from spontaneous hydrolysis and promotes its binding to the 30S ribosomal subunits. Also involved in the hydrolysis of GTP during the formation of the 70S ribosomal complex. This is Translation initiation factor IF-2 from Paramagnetospirillum magneticum (strain ATCC 700264 / AMB-1) (Magnetospirillum magneticum).